The chain runs to 237 residues: Protein GrpE (237 aa).

2 disordered regions span residues 27–51 (EDRE…LSET) and 202–237 (AVSS…PQHS). Low complexity-rich tracts occupy residues 33–45 (ASTS…AEAS) and 204–213 (SSGSPTSEPS). Over residues 227–237 (TPASPQNPQHS) the composition is skewed to polar residues.

Belongs to the GrpE family. Homodimer.

The protein localises to the cytoplasm. Its function is as follows. Participates actively in the response to hyperosmotic and heat shock by preventing the aggregation of stress-denatured proteins, in association with DnaK and GrpE. It is the nucleotide exchange factor for DnaK and may function as a thermosensor. Unfolded proteins bind initially to DnaJ; upon interaction with the DnaJ-bound protein, DnaK hydrolyzes its bound ATP, resulting in the formation of a stable complex. GrpE releases ADP from DnaK; ATP binding to DnaK triggers the release of the substrate protein, thus completing the reaction cycle. Several rounds of ATP-dependent interactions between DnaJ, DnaK and GrpE are required for fully efficient folding. The chain is Protein GrpE from Synechococcus sp. (strain JA-3-3Ab) (Cyanobacteria bacterium Yellowstone A-Prime).